The chain runs to 182 residues: Allergen Bla g 4 (182 aa).

The first 12 residues, 1 to 12 (AVLALCATDTLA), serve as a signal peptide directing secretion. A glycan (N-linked (GlcNAc...) asparagine) is linked at Asn72.

It belongs to the calycin superfamily. Triabin family.

Its subcellular location is the secreted. Probable ligand-binding protein. In Blattella germanica (German cockroach), this protein is Allergen Bla g 4.